A 166-amino-acid chain; its full sequence is Endoribonuclease YbeY (166 aa).

3 residues coordinate Zn(2+): His132, His136, and His142.

Belongs to the endoribonuclease YbeY family. The cofactor is Zn(2+).

The protein localises to the cytoplasm. Single strand-specific metallo-endoribonuclease involved in late-stage 70S ribosome quality control and in maturation of the 3' terminus of the 16S rRNA. The protein is Endoribonuclease YbeY of Clostridium botulinum (strain 657 / Type Ba4).